The primary structure comprises 882 residues: Alanine--tRNA ligase (882 aa).

Residues His570, His574, Cys672, and His676 each coordinate Zn(2+).

It belongs to the class-II aminoacyl-tRNA synthetase family. The cofactor is Zn(2+).

It is found in the cytoplasm. The catalysed reaction is tRNA(Ala) + L-alanine + ATP = L-alanyl-tRNA(Ala) + AMP + diphosphate. Catalyzes the attachment of alanine to tRNA(Ala) in a two-step reaction: alanine is first activated by ATP to form Ala-AMP and then transferred to the acceptor end of tRNA(Ala). Also edits incorrectly charged Ser-tRNA(Ala) and Gly-tRNA(Ala) via its editing domain. The polypeptide is Alanine--tRNA ligase (Xanthomonas campestris pv. campestris (strain 8004)).